The following is a 429-amino-acid chain: Enolase (429 aa).

A (2R)-2-phosphoglycerate-binding site is contributed by Gln-174. Residue Glu-218 is the Proton donor of the active site. Positions 254, 295, and 321 each coordinate Mg(2+). Residues Lys-346, Arg-375, Ser-376, and Lys-397 each coordinate (2R)-2-phosphoglycerate. The active-site Proton acceptor is Lys-346.

Belongs to the enolase family. The cofactor is Mg(2+).

Its subcellular location is the cytoplasm. The protein resides in the secreted. The protein localises to the cell surface. It carries out the reaction (2R)-2-phosphoglycerate = phosphoenolpyruvate + H2O. The protein operates within carbohydrate degradation; glycolysis; pyruvate from D-glyceraldehyde 3-phosphate: step 4/5. Catalyzes the reversible conversion of 2-phosphoglycerate (2-PG) into phosphoenolpyruvate (PEP). It is essential for the degradation of carbohydrates via glycolysis. This is Enolase from Methanosarcina acetivorans (strain ATCC 35395 / DSM 2834 / JCM 12185 / C2A).